We begin with the raw amino-acid sequence, 1522 residues long: Lysine-specific demethylase 5B (1522 aa).

Positions 10–51 (CPVFEPSWEEFADPFAFIHKIRPIAEQTGICKVRPPPDWQPP) constitute a JmjN domain. The ARID domain occupies 75–165 (TRVKLNFLDQ…ILYPYNLFQS (91 aa)). A compositionally biased stretch (basic and acidic residues) spans 180 to 192 (DTKDKEYKPHDIP). The tract at residues 180–229 (DTKDKEYKPHDIPQRQSVQPSESCPPARRAKRLRAEATNIKTESDSPEVR) is disordered. The PHD-type 1 zinc finger occupies 284-334 (LYVCLLCGSGNDEDRLLLCDGCDDSYHTFCLIPPLHDVPKGDWRCPQCLAQ). 2-oxoglutarate is bound at residue tyrosine 400. One can recognise a JmjC domain in the interval 428–594 (EYLDSGWNLN…LGRQCIEHYR (167 aa)). Residues histidine 474 and glutamate 476 each contribute to the Fe cation site. The 2-oxoglutarate site is built by serine 482, asparagine 484, and lysine 492. Histidine 562 serves as a coordination point for Fe cation. Residues 667 to 719 (CYKCKTTCFMSAVYCPCKPGLLVCLYHVEDLCSCPTYQYKLGYRYTLEELYPM) form a C5HC2 zinc finger. Residues 1151–1199 (LKVCVCQKEPAAPMIQCELCRGFFHTGCVSVPHALQGPRVWLCPQCRRS) form a PHD-type 2 zinc finger. The span at 1353–1365 (LQAEQKPSVGPSN) shows a compositional bias: polar residues. Disordered regions lie at residues 1353-1373 (LQAE…CCRG) and 1400-1460 (ARVR…DSED). Basic residues predominate over residues 1400–1416 (ARVRKMRTPKKKKLKLS). Basic and acidic residues predominate over residues 1426–1442 (RMERERERLLEAQRSSE). Residues 1462–1516 (DAICPAVTCLQPEGEEVDWVQCDGSCNQWFHQVCVGISPEMAEKEDYICASCAGK) form a PHD-type 3 zinc finger.

This sequence belongs to the JARID1 histone demethylase family. It depends on Fe(2+) as a cofactor.

The protein resides in the nucleus. The enzyme catalyses N(6),N(6),N(6)-trimethyl-L-lysyl(4)-[histone H3] + 3 2-oxoglutarate + 3 O2 = L-lysyl(4)-[histone H3] + 3 formaldehyde + 3 succinate + 3 CO2. Functionally, histone demethylase that demethylates 'Lys-4' of histone H3, thereby playing a central role in histone code. Does not demethylate histone H3 'Lys-9' or H3 'Lys-27'. Demethylates trimethylated, dimethylated and monomethylated H3 'Lys-4'. Acts as a transcriptional corepressor. May repress the CLOCK-BMAL1 heterodimer-mediated transcriptional activation of the core clock component PER2. The sequence is that of Lysine-specific demethylase 5B (KDM5B) from Gallus gallus (Chicken).